Reading from the N-terminus, the 207-residue chain is Large ribosomal subunit protein uL4 (207 aa).

Positions 47–78 (GTAKTKTRAEVRGGGKKPWRQKGTGRARQGSI) are disordered. Over residues 60–71 (GGKKPWRQKGTG) the composition is skewed to basic residues.

It belongs to the universal ribosomal protein uL4 family. As to quaternary structure, part of the 50S ribosomal subunit.

Its function is as follows. One of the primary rRNA binding proteins, this protein initially binds near the 5'-end of the 23S rRNA. It is important during the early stages of 50S assembly. It makes multiple contacts with different domains of the 23S rRNA in the assembled 50S subunit and ribosome. In terms of biological role, forms part of the polypeptide exit tunnel. The protein is Large ribosomal subunit protein uL4 of Acholeplasma laidlawii (strain PG-8A).